Consider the following 313-residue polypeptide: Putative HTH-type transcriptional regulatory protein Msm_0453 (313 aa).

The HTH cro/C1-type domain occupies 131-189 (IKQYREEYSLSLKDLADLAHVSRATMYKYENEIVRANTETAMILEEILNTKVTLDIDLL). A DNA-binding region (H-T-H motif) is located at residues 142-161 (LKDLADLAHVSRATMYKYEN).

This chain is Putative HTH-type transcriptional regulatory protein Msm_0453, found in Methanobrevibacter smithii (strain ATCC 35061 / DSM 861 / OCM 144 / PS).